Consider the following 246-residue polypeptide: Phycocyanobilin:ferredoxin oxidoreductase (246 aa).

Belongs to the HY2 family.

The catalysed reaction is (2R,3Z)-phycocyanobilin + 4 oxidized [2Fe-2S]-[ferredoxin] = biliverdin IXalpha + 4 reduced [2Fe-2S]-[ferredoxin] + 4 H(+). Functionally, catalyzes the four-electron reduction of biliverdin IX-alpha (2-electron reduction at both the A and D rings); the reaction proceeds via an isolatable 2-electron intermediate, 181,182-dihydrobiliverdin. This chain is Phycocyanobilin:ferredoxin oxidoreductase, found in Crocosphaera subtropica (strain ATCC 51142 / BH68) (Cyanothece sp. (strain ATCC 51142)).